The sequence spans 354 residues: Nicotinate-nucleotide--dimethylbenzimidazole phosphoribosyltransferase (354 aa).

The active-site Proton acceptor is the Glu-319.

Belongs to the CobT family.

The enzyme catalyses 5,6-dimethylbenzimidazole + nicotinate beta-D-ribonucleotide = alpha-ribazole 5'-phosphate + nicotinate + H(+). Its pathway is nucleoside biosynthesis; alpha-ribazole biosynthesis; alpha-ribazole from 5,6-dimethylbenzimidazole: step 1/2. Catalyzes the synthesis of alpha-ribazole-5'-phosphate from nicotinate mononucleotide (NAMN) and 5,6-dimethylbenzimidazole (DMB). The polypeptide is Nicotinate-nucleotide--dimethylbenzimidazole phosphoribosyltransferase (Chlorobium chlorochromatii (strain CaD3)).